The chain runs to 256 residues: Spore coat polysaccharide biosynthesis protein SpsA (256 aa).

C155 and C243 are disulfide-bonded. The active site involves D191.

Belongs to the glycosyltransferase 2 family. As to quaternary structure, monomer in solution.

The protein operates within spore coat biogenesis; spore coat polysaccharide biosynthesis. Functionally, glycosyltransferase implicated in the synthesis of the spore coat. This is Spore coat polysaccharide biosynthesis protein SpsA (spsA) from Bacillus subtilis (strain 168).